Consider the following 576-residue polypeptide: Peptidoglycan D,D-transpeptidase FtsI (576 aa).

Residues isoleucine 22–phenylalanine 42 form a helical membrane-spanning segment. The active-site Acyl-ester intermediate is the serine 308.

This sequence belongs to the transpeptidase family. FtsI subfamily.

The protein localises to the cell inner membrane. The enzyme catalyses Preferential cleavage: (Ac)2-L-Lys-D-Ala-|-D-Ala. Also transpeptidation of peptidyl-alanyl moieties that are N-acyl substituents of D-alanine.. It participates in cell wall biogenesis; peptidoglycan biosynthesis. Catalyzes cross-linking of the peptidoglycan cell wall at the division septum. The chain is Peptidoglycan D,D-transpeptidase FtsI from Buchnera aphidicola subsp. Baizongia pistaciae (strain Bp).